A 608-amino-acid chain; its full sequence is 1-deoxy-D-xylulose-5-phosphate synthase (608 aa).

Residues His66 and 107-109 contribute to the thiamine diphosphate site; that span reads GHA. Residue Asp138 coordinates Mg(2+). Residues 139-140, Asn167, Phe277, and Glu350 contribute to the thiamine diphosphate site; that span reads GA. Asn167 provides a ligand contact to Mg(2+).

Belongs to the transketolase family. DXPS subfamily. In terms of assembly, homodimer. Requires Mg(2+) as cofactor. Thiamine diphosphate is required as a cofactor.

The catalysed reaction is D-glyceraldehyde 3-phosphate + pyruvate + H(+) = 1-deoxy-D-xylulose 5-phosphate + CO2. It functions in the pathway metabolic intermediate biosynthesis; 1-deoxy-D-xylulose 5-phosphate biosynthesis; 1-deoxy-D-xylulose 5-phosphate from D-glyceraldehyde 3-phosphate and pyruvate: step 1/1. Functionally, catalyzes the acyloin condensation reaction between C atoms 2 and 3 of pyruvate and glyceraldehyde 3-phosphate to yield 1-deoxy-D-xylulose-5-phosphate (DXP). The protein is 1-deoxy-D-xylulose-5-phosphate synthase of Thermotoga petrophila (strain ATCC BAA-488 / DSM 13995 / JCM 10881 / RKU-1).